Here is a 249-residue protein sequence, read N- to C-terminus: Cobalt transport protein CbiM (249 aa).

Positions 1 to 27 (MKPLHRWLPVVIGAALLIIFESRAAYA) are cleaved as a signal peptide. The next 6 helical transmembrane spans lie at 33 to 53 (GFLP…FWVL), 70 to 90 (LLLG…IPSV), 102 to 122 (LGTI…VLLF), 134 to 154 (TLGA…WLIW), 161 to 181 (APIW…TYVV), and 207 to 227 (IFAV…VLIF).

Belongs to the CbiM family. In terms of assembly, forms an energy-coupling factor (ECF) transporter complex composed of an ATP-binding protein (A component, CbiO), a transmembrane protein (T component, CbiQ) and 2 possible substrate-capture proteins (S components, CbiM and CbiN) of unknown stoichimetry.

Its subcellular location is the cell membrane. It functions in the pathway cofactor biosynthesis; adenosylcobalamin biosynthesis. In terms of biological role, part of the energy-coupling factor (ECF) transporter complex CbiMNOQ involved in cobalt import. The sequence is that of Cobalt transport protein CbiM from Roseiflexus sp. (strain RS-1).